Reading from the N-terminus, the 481-residue chain is F-box/FBD/LRR-repeat protein At5g18770 (481 aa).

The region spanning 23-69 (EDMISALPDHLLCHILIFLSTDESVLTSVLSSRWRNLWKWVPRLDLN) is the F-box domain. LRR repeat units follow at residues 126-153 (KPNV…TLSA), 159-185 (CLKL…YLED), 186-211 (VVFP…KLSL), 214-234 (DDVV…TLKR), 236-261 (VPVY…SLID), 289-314 (DELS…TISW), and 340-368 (ATMS…HFTL). The FBD domain occupies 378–430 (VITGFSRVLPRCLVFSLESVEMESPITEKATELKLVRYFLENSATLKKLVLLL).

The sequence is that of F-box/FBD/LRR-repeat protein At5g18770 from Arabidopsis thaliana (Mouse-ear cress).